Reading from the N-terminus, the 131-residue chain is Fatty acid-binding protein (131 aa).

Residues Arg106 and 126 to 128 each bind (5Z,8Z,11Z,14Z)-eicosatetraenoate; that span reads RFY. Residues Arg106 and 126–128 each bind (9Z)-octadecenoate; that span reads RFY.

The protein belongs to the calycin superfamily. Fatty-acid binding protein (FABP) family.

Its subcellular location is the cytoplasm. Its function is as follows. FABPs are thought to play a role in the intracellular transport of long-chain fatty acids and their acyl-CoA esters. The sequence is that of Fatty acid-binding protein from Tyrophagus putrescentiae (Mold mite).